A 723-amino-acid polypeptide reads, in one-letter code: Catalase-peroxidase (723 aa).

The tryptophyl-tyrosyl-methioninium (Trp-Tyr) (with M-238) cross-link spans 89–212 (WHSAGTYRTG…LAAVQMGLIY (124 aa)). The active-site Proton acceptor is H90. The segment at residues 212–238 (YVNPEGPNGDPDPFAAAVDIRETFARM) is a cross-link (tryptophyl-tyrosyl-methioninium (Tyr-Met) (with W-89)). H253 is a binding site for heme b.

This sequence belongs to the peroxidase family. Peroxidase/catalase subfamily. Homodimer or homotetramer. Requires heme b as cofactor. Post-translationally, formation of the three residue Trp-Tyr-Met cross-link is important for the catalase, but not the peroxidase activity of the enzyme.

It catalyses the reaction H2O2 + AH2 = A + 2 H2O. The enzyme catalyses 2 H2O2 = O2 + 2 H2O. In terms of biological role, bifunctional enzyme with both catalase and broad-spectrum peroxidase activity. The polypeptide is Catalase-peroxidase (Shewanella baltica (strain OS185)).